Reading from the N-terminus, the 299-residue chain is Prohibitin-2 (299 aa).

The residue at position 2 (Ala2) is an N-acetylalanine. Positions 19–49 are necessary for transcriptional repression; the sequence is MGTALKLLLGAGAVAYGIRESVFTVEGGHRA. Tyr128 bears the Phosphotyrosine mark. Lys147 is subject to N6-acetyllysine. The segment at 150–174 is necessary for transcriptional repression; sequence ASQLITQRAQVSLLIRRELTERAKD. Ser151 is subject to Phosphoserine. The stretch at 190–238 forms a coiled coil; it reads SREYTAAVEAKQVAQQEAQRAQFLVEKAKQEQRQKIVQAEGEAEAARML. Residues Lys200, Lys250, and Lys262 each carry the N6-acetyllysine modification.

This sequence belongs to the prohibitin family. As to quaternary structure, the mitochondrial prohibitin complex consists of two subunits (PHB1 and PHB2), assembled into a membrane-associated ring-shaped supercomplex of approximately 1 mDa. Interacts with ESR1, HDAC1 and HDAC5. Interacts with ZNF703. Interacts with STOML2. Interacts with ARFGEF3. Interacts with SPHK2. Interacts with COX4I1; the interaction associates PHB2 with COX. Interacts with MAP1LC3B (membrane-bound form LC3-II); the interaction is direct and upon mitochondrial depolarization and proteasome-dependent outer membrane rupture. Interacts with IGFBP6 (via C-terminal domain). Interacts with CLPB. Interacts with CD86 (via cytoplasmic domain); the interactions increases after priming with CD40. Interacts with AFG3L2. Interacts with DNAJC19. Interacts with AKT2; this interaction may be important for myogenic differentiation. Post-translationally, phosphorylated. Tyrosine phosphorylation is indirectly stimulated by IGFBP6.

The protein resides in the mitochondrion inner membrane. Its subcellular location is the cytoplasm. The protein localises to the nucleus. It is found in the cell membrane. Its function is as follows. Protein with pleiotropic attributes mediated in a cell-compartment- and tissue-specific manner, which include the plasma membrane-associated cell signaling functions, mitochondrial chaperone, and transcriptional co-regulator of transcription factors and sex steroid hormones in the nucleus. Functionally, in the mitochondria, together with PHB, forms large ring complexes (prohibitin complexes) in the inner mitochondrial membrane (IMM) and functions as a chaperone protein that stabilizes mitochondrial respiratory enzymes and maintains mitochondrial integrity in the IMM, which is required for mitochondrial morphogenesis, neuronal survival, and normal lifespan. The prohibitin complex, with DNAJC19, regulates cardiolipin remodeling and the protein turnover of OMA1 in a cardiolipin-binding manner. Also regulates cytochrome-c oxidase assembly (COX) and mitochondrial respiration. Binding to sphingoid 1-phosphate (SPP) modulates its regulator activity. Has a key role of mitophagy receptor involved in targeting mitochondria for autophagic degradation. Involved in mitochondrial-mediated antiviral innate immunity, activates RIG-I-mediated signal transduction and production of IFNB1 and pro-inflammatory cytokine IL6. In the nucleus, serves as transcriptional co-regulator. Acts as a mediator of transcriptional repression by nuclear hormone receptors via recruitment of histone deacetylases. Functions as an estrogen receptor (ER)-selective coregulator that potentiates the inhibitory activities of antiestrogens and represses the activity of estrogens. Competes with NCOA1 for modulation of ER transcriptional activity. In terms of biological role, in the plasma membrane, is involved in IGFBP6-induced cell migration. Cooperates with CD86 to mediate CD86-signaling in B lymphocytes that regulates the level of IgG1 produced through the activation of distal signaling intermediates. Upon CD40 engagement, required to activate NF-kappa-B signaling pathway via phospholipase C and protein kinase C activation. The protein is Prohibitin-2 (PHB2) of Bos taurus (Bovine).